We begin with the raw amino-acid sequence, 467 residues long: MGSKSPDGHRQGPNAESPSSSVAATTNPPKPAAASGLVQGMLDGDDEDEDGDDDGDNQRIGADLKSGVLPNNDGKKRKRKSNKKKKKKTSKGQQTTPPRVSLPSIFHDQRYPEGEIVEYAARNDNLQRTTAEELRHQAAIHNMDDEFLTDYRQAAEVHRQVRQYVQSIAKPGILMSELAEEIETGVRALTGHQGIETGDALKAGLAFPTGLCLNNVAAHWTPNPGAKEVILKHDDVLKIDFGVHVNGRIVDSAFTVASNPVYDNLLTAVKAATNTGLKEAGIDARIDHISGEIQEVMESYEVEINGKAIPVKALRSLTGHNILRYKIHGEKQVPFVKSKTTQRMEEGDVFAIETFGSTGKGYTRDEVGVYGYGLNEHASTAGLHHASAKSLLKTIRENFGTLVFSRRYLEHMGVKNYHLGMRSLISNDIVECYAPLVDVPGSYVAQFEHTVLLRPNCKEIISRGDDY.

Basic and acidic residues predominate over residues 1 to 10; that stretch reads MGSKSPDGHR. Positions 1-105 are disordered; sequence MGSKSPDGHR…TPPRVSLPSI (105 aa). The segment covering 43-55 has biased composition (acidic residues); the sequence is DGDDEDEDGDDDG. The segment covering 75-90 has biased composition (basic residues); sequence KKRKRKSNKKKKKKTS. H219 contributes to the substrate binding site. A divalent metal cation-binding residues include D240, D251, and H320. H328 is a substrate binding site. 2 residues coordinate a divalent metal cation: E353 and E448.

This sequence belongs to the peptidase M24A family. Methionine aminopeptidase eukaryotic type 2 subfamily. Requires Co(2+) as cofactor. Zn(2+) is required as a cofactor. The cofactor is Mn(2+). Fe(2+) serves as cofactor.

The protein resides in the cytoplasm. The catalysed reaction is Release of N-terminal amino acids, preferentially methionine, from peptides and arylamides.. Functionally, cotranslationally removes the N-terminal methionine from nascent proteins. The N-terminal methionine is often cleaved when the second residue in the primary sequence is small and uncharged (Met-Ala-, Cys, Gly, Pro, Ser, Thr, or Val). In Arthroderma gypseum (strain ATCC MYA-4604 / CBS 118893) (Microsporum gypseum), this protein is Methionine aminopeptidase 2-1.